The sequence spans 285 residues: Elongation factor Ts (285 aa).

Residues 82–85 (TDFV) are involved in Mg(2+) ion dislocation from EF-Tu.

This sequence belongs to the EF-Ts family.

It localises to the cytoplasm. Its function is as follows. Associates with the EF-Tu.GDP complex and induces the exchange of GDP to GTP. It remains bound to the aminoacyl-tRNA.EF-Tu.GTP complex up to the GTP hydrolysis stage on the ribosome. In Sodalis glossinidius (strain morsitans), this protein is Elongation factor Ts.